A 313-amino-acid chain; its full sequence is Protein-methionine-sulfoxide reductase catalytic subunit MsrP (313 aa).

The segment at residues 1 to 45 (MPAYRPPHIASSEITPKSFYLSRRNFLGTAAGLAAIGLAGREAIA) is a signal peptide (tat-type signal). Residues N71, 74-75 (YE), C128, T163, N213, R218, and 229-231 (GIK) contribute to the Mo-molybdopterin site.

This sequence belongs to the MsrP family. As to quaternary structure, heterodimer of a catalytic subunit (MsrP) and a heme-binding subunit (MsrQ). It depends on Mo-molybdopterin as a cofactor. Predicted to be exported by the Tat system. The position of the signal peptide cleavage has not been experimentally proven.

The protein localises to the periplasm. The catalysed reaction is L-methionyl-[protein] + a quinone + H2O = L-methionyl-(S)-S-oxide-[protein] + a quinol. It carries out the reaction L-methionyl-[protein] + a quinone + H2O = L-methionyl-(R)-S-oxide-[protein] + a quinol. Functionally, part of the MsrPQ system that repairs oxidized periplasmic proteins containing methionine sulfoxide residues (Met-O), using respiratory chain electrons. Thus protects these proteins from oxidative-stress damage caused by reactive species of oxygen and chlorine generated by the host defense mechanisms. MsrPQ is essential for the maintenance of envelope integrity under bleach stress, rescuing a wide series of structurally unrelated periplasmic proteins from methionine oxidation. The catalytic subunit MsrP is non-stereospecific, being able to reduce both (R-) and (S-) diastereoisomers of methionine sulfoxide. The protein is Protein-methionine-sulfoxide reductase catalytic subunit MsrP of Agrobacterium fabrum (strain C58 / ATCC 33970) (Agrobacterium tumefaciens (strain C58)).